Consider the following 274-residue polypeptide: Large ribosomal subunit protein uL2 (274 aa).

Residues 223–258 (VAMNPVDHPHGGGEGRTSGGRHPVTPWGIPTKGYKT) are disordered.

This sequence belongs to the universal ribosomal protein uL2 family. Part of the 50S ribosomal subunit. Forms a bridge to the 30S subunit in the 70S ribosome.

Its function is as follows. One of the primary rRNA binding proteins. Required for association of the 30S and 50S subunits to form the 70S ribosome, for tRNA binding and peptide bond formation. It has been suggested to have peptidyltransferase activity; this is somewhat controversial. Makes several contacts with the 16S rRNA in the 70S ribosome. In Geotalea daltonii (strain DSM 22248 / JCM 15807 / FRC-32) (Geobacter daltonii), this protein is Large ribosomal subunit protein uL2.